Consider the following 803-residue polypeptide: Volume-regulated anion channel subunit LRRC8B (803 aa).

Residues 1–25 (MITLTELKCLADAQSSYHILKPWWD) lie on the Cytoplasmic side of the membrane. Residues 26 to 46 (VFWYYITLIMLLVAVLAGALQ) traverse the membrane as a helical segment. Topologically, residues 47 to 119 (LTQSRVLCCL…YEKQLHWFAK (73 aa)) are extracellular. Disulfide bonds link C55-C304 and C109-C289. N78 carries an N-linked (GlcNAc...) asparagine glycan. A helical transmembrane segment spans residues 120 to 140 (FFPYLVLLHTLIFAACSNFWL). Topologically, residues 141 to 261 (HYPSTSSRLE…DIIYRVYLKQ (121 aa)) are cytoplasmic. Residues S186 and S196 each carry the phosphoserine modification. Residues 262-282 (IIVKVILFVLIITYVPYFLTH) form a helical membrane-spanning segment. Topologically, residues 283–307 (ITLEIDCSVDVQAFTGYKRYQCVYS) are extracellular. Residues 308-328 (LAEIFKVLASFYVILVILYGL) form a helical membrane-spanning segment. At 329–803 (TSSYSLWWML…ERLQTCLDKC (475 aa)) the chain is on the cytoplasmic side. LRR repeat units follow at residues 464–486 (NLKELRVYHSSLVVDHPALAFLE), 488–509 (NLKILRLKFTEMGKIPRWVFHL), 511–532 (NLKELYLSGCVLPEQLSTMQLE), 539–559 (NLRTLYLKSSLSRIPQVVTDL), 562–582 (SLQKLSLDNEGSKLVVLNNLK), 586–607 (NLKSLELISCDLERIPHSIFSL), 609–630 (NLHELDLRENNLKTVEEIISFQ), 634–655 (NLSCLKLWHNNIAYIPAQIGAL), 657–678 (NLEQLSLDHNNIENLPLQLFLC), 680–701 (KLHYLDLSYNHLTFIPEEIQYL), 703–724 (NLQYFAVTNNNIEMLPDGLFQC), 726–747 (KLQCLLLGKNSLMNLSPHVGEL), and 749–771 (NLTHLELIGNYLETLPPELEGCQ).

It belongs to the LRRC8 family. Heterohexamer; oligomerizes with other LRRC8 proteins (LRRC8A, LRRC8C, LRRC8D and/or LRRC8E) to form a heterohexamer. In vivo, the subunit composition may depend primarily on expression levels, and heterooligomeric channels containing various proportions of the different LRRC8 proteins may coexist.

The protein resides in the cell membrane. It localises to the endoplasmic reticulum membrane. It catalyses the reaction chloride(in) = chloride(out). The enzyme catalyses iodide(out) = iodide(in). The catalysed reaction is taurine(out) = taurine(in). In terms of biological role, non-essential component of the volume-regulated anion channel (VRAC, also named VSOAC channel), an anion channel required to maintain a constant cell volume in response to extracellular or intracellular osmotic changes. The VRAC channel conducts iodide better than chloride and can also conduct organic osmolytes like taurine. Channel activity requires LRRC8A plus at least one other family member (LRRC8B, LRRC8C, LRRC8D or LRRC8E); channel characteristics depend on the precise subunit composition. This is Volume-regulated anion channel subunit LRRC8B from Homo sapiens (Human).